A 92-amino-acid chain; its full sequence is Cell division protein FtsL (92 aa).

Residues 1 to 3 (MGR) are Cytoplasmic-facing. The chain crosses the membrane as a helical span at residues 4–21 (ISLIVAALLMLSAISLVT). At 22 to 92 (SRYQSRQLFI…YMNQPAGGAQ (71 aa)) the chain is on the periplasmic side.

The protein belongs to the FtsL family. As to quaternary structure, part of a complex composed of FtsB, FtsL and FtsQ.

The protein resides in the cell inner membrane. Its function is as follows. Essential cell division protein. May link together the upstream cell division proteins, which are predominantly cytoplasmic, with the downstream cell division proteins, which are predominantly periplasmic. This is Cell division protein FtsL from Bordetella pertussis (strain Tohama I / ATCC BAA-589 / NCTC 13251).